The sequence spans 338 residues: S-adenosylmethionine:tRNA ribosyltransferase-isomerase (338 aa).

The protein belongs to the QueA family. In terms of assembly, monomer.

The protein resides in the cytoplasm. The enzyme catalyses 7-aminomethyl-7-carbaguanosine(34) in tRNA + S-adenosyl-L-methionine = epoxyqueuosine(34) in tRNA + adenine + L-methionine + 2 H(+). It participates in tRNA modification; tRNA-queuosine biosynthesis. Its function is as follows. Transfers and isomerizes the ribose moiety from AdoMet to the 7-aminomethyl group of 7-deazaguanine (preQ1-tRNA) to give epoxyqueuosine (oQ-tRNA). The chain is S-adenosylmethionine:tRNA ribosyltransferase-isomerase from Francisella tularensis subsp. mediasiatica (strain FSC147).